A 980-amino-acid polypeptide reads, in one-letter code: Putative formate dehydrogenase YrhE (980 aa).

In terms of domain architecture, 2Fe-2S ferredoxin-type spans 5–81 (KSISVRVDGT…GMSIDLSGNR (77 aa)). [2Fe-2S] cluster contacts are provided by C39, C50, C53, and C65. Positions 81-121 (RVKEAQTEAMDRLLENHLLYCTVCDNNNGNCTLHNTAEMMG) constitute a 4Fe-4S His(Cys)3-ligated-type domain. [4Fe-4S] cluster contacts are provided by H97, C101, C104, C111, C153, C156, C159, C163, C196, C199, C202, C206, C270, C273, C277, and C305. 2 consecutive 4Fe-4S ferredoxin-type domains span residues 144-171 (PFYR…VNET) and 187-216 (EGVP…EKSM). Residues 258–980 (MRETRTKKTK…NRPGYVHLTD (723 aa)) are formate dehydrogenase. Residues 263-319 (TKKTKTVCTFCGVGCSFEVWTKGRDILKIQPVSDAPVNAISTCVKGKFGWDFVNSKE) enclose the 4Fe-4S Mo/W bis-MGD-type domain. The interval 944–980 (ETAPLPKTNPRNKKRHPQNGVEAERKWNRPGYVHLTD) is disordered.

It in the C-terminal section; belongs to the prokaryotic molybdopterin-containing oxidoreductase family. [2Fe-2S] cluster is required as a cofactor. It depends on [4Fe-4S] cluster as a cofactor. Mo-bis(molybdopterin guanine dinucleotide) serves as cofactor.

It catalyses the reaction formate + NAD(+) = CO2 + NADH. The protein is Putative formate dehydrogenase YrhE (yrhE) of Bacillus subtilis (strain 168).